Here is a 442-residue protein sequence, read N- to C-terminus: MRLSRFFMPILKENPKEAEIVSHRLMLRTGMVRQQSAGIYTWLPLGKRVLDKVNAIIREEQNRSGAIELLMPTLQSAELWQESGRYDAYGKEMLRIKDRQDRPMLYGPTNEEMITDIFRSYVKSYRNLPLNLYHIQLKFRDEIRPRFGTMRSREFLMKDAYSFDLDRAGAEHAYNKMFAAYLRTFDRMGLRAIPMRADTGPIGGNLSHEFIILADTGESEVFCHKDFLGFDIPGEDTNFDDVAGLKTIFDKWTSRYAATSEMHDEAAFGAIAEGERLSARGIEVGHIFYFGTKYSEAMGAKVLGPDGKEHTVHMGSYGIGPTRLVPAIIEASHDDNGIIWPKGIAPFDVVVINMKTGDEACDAACGKVYSDLGKAGFDVLLDDTDERAGGKFATADLIGVPVQVIVGPRSIANGEVEVKDRKTGARETMTVEAAINKLVAAR.

This sequence belongs to the class-II aminoacyl-tRNA synthetase family. ProS type 2 subfamily. In terms of assembly, homodimer.

It localises to the cytoplasm. The catalysed reaction is tRNA(Pro) + L-proline + ATP = L-prolyl-tRNA(Pro) + AMP + diphosphate. Its function is as follows. Catalyzes the attachment of proline to tRNA(Pro) in a two-step reaction: proline is first activated by ATP to form Pro-AMP and then transferred to the acceptor end of tRNA(Pro). The protein is Proline--tRNA ligase of Rhizobium meliloti (strain 1021) (Ensifer meliloti).